Here is a 401-residue protein sequence, read N- to C-terminus: Phosphoglycerate kinase (401 aa).

Substrate contacts are provided by residues 20-22 (DFN), arginine 35, 58-61 (HLGR), arginine 117, and arginine 154. Residues lysine 204, glycine 298, glutamate 329, and 358 to 361 (GGDS) each bind ATP.

The protein belongs to the phosphoglycerate kinase family. As to quaternary structure, monomer.

The protein localises to the cytoplasm. It catalyses the reaction (2R)-3-phosphoglycerate + ATP = (2R)-3-phospho-glyceroyl phosphate + ADP. It participates in carbohydrate degradation; glycolysis; pyruvate from D-glyceraldehyde 3-phosphate: step 2/5. This chain is Phosphoglycerate kinase, found in Bifidobacterium adolescentis (strain ATCC 15703 / DSM 20083 / NCTC 11814 / E194a).